A 542-amino-acid chain; its full sequence is 1-aminocyclopropane-1-carboxylate synthase 6 (542 aa).

The segment at 1–28 is disordered; sequence MRRSGNGGAAKKKKKRSASAASERRPRA. At K379 the chain carries N6-(pyridoxal phosphate)lysine.

It belongs to the class-I pyridoxal-phosphate-dependent aminotransferase family. Pyridoxal 5'-phosphate serves as cofactor. Expressed in leaves.

The protein resides in the plastid. The protein localises to the amyloplast membrane. It catalyses the reaction S-adenosyl-L-methionine = 1-aminocyclopropane-1-carboxylate + S-methyl-5'-thioadenosine + H(+). It functions in the pathway alkene biosynthesis; ethylene biosynthesis via S-adenosyl-L-methionine; ethylene from S-adenosyl-L-methionine: step 1/2. Catalyzes the formation of 1-aminocyclopropane-1-carboxylate, a direct precursor of ethylene in higher plants. Required for the regulation of starch grain size in endosperm. The protein is 1-aminocyclopropane-1-carboxylate synthase 6 of Oryza sativa subsp. japonica (Rice).